A 413-amino-acid chain; its full sequence is Succinate--CoA ligase [ADP-forming] subunit beta, mitochondrial (413 aa).

The transit peptide at 1-2 directs the protein to the mitochondrion; it reads RR. Residues 11-238 enclose the ATP-grasp domain; the sequence is MGLLQEAGIS…SNSAYRQKKI (228 aa). ATP contacts are provided by residues K48 and 55–57; that span reads GRG. 2 residues coordinate Mg(2+): N208 and D222. Residues N273 and 330–332 each bind substrate; that span reads GIM.

It belongs to the succinate/malate CoA ligase beta subunit family. ATP-specific subunit beta subfamily. As to quaternary structure, heterodimer of an alpha and a beta subunit. The beta subunit determines specificity for ATP. It depends on Mg(2+) as a cofactor. In terms of tissue distribution, widely expressed. Not present in liver.

Its subcellular location is the mitochondrion. It catalyses the reaction succinate + ATP + CoA = succinyl-CoA + ADP + phosphate. Its pathway is carbohydrate metabolism; tricarboxylic acid cycle; succinate from succinyl-CoA (ligase route): step 1/1. ATP-specific succinyl-CoA synthetase functions in the citric acid cycle (TCA), coupling the hydrolysis of succinyl-CoA to the synthesis of ATP and thus represents the only step of substrate-level phosphorylation in the TCA. The beta subunit provides nucleotide specificity of the enzyme and binds the substrate succinate, while the binding sites for coenzyme A and phosphate are found in the alpha subunit. This chain is Succinate--CoA ligase [ADP-forming] subunit beta, mitochondrial, found in Columba livia (Rock dove).